The chain runs to 388 residues: Alpha-2B adrenergic receptor (388 aa).

The helical transmembrane segment at 1 to 25 (AIAAVITFLILFTIFGNALVILAVL) threads the bilayer. The Cytoplasmic segment spans residues 26–36 (TSRSLRAPQNL). Residues 37–62 (FLVSLAAADILVATLIIPFSLANELL) traverse the membrane as a helical segment. Over 63 to 72 (GYWYFRRTWC) the chain is Extracellular. An intrachain disulfide couples Cys-72 to Cys-151. Residues 73–95 (EVYLALDVLFCTSSIVHLCAISL) traverse the membrane as a helical segment. The Cytoplasmic segment spans residues 96–117 (DRYWAVSRALEYNSKRTPRXIK). A helical membrane pass occupies residues 118-140 (CIILTVWLIAAAISLPPLIYKGD). Over 141-156 (QGPQPRGRPQCKLNQE) the chain is Extracellular. The chain crosses the membrane as a helical span at residues 157–180 (AWYILSSSIGSFFAPCLIMILVYL). Residues 181–352 (RIYVIAKRSN…LTREKRFTFV (172 aa)) lie on the Cytoplasmic side of the membrane. Residues 193–309 (GPRAKGASRE…ASACNPPLQQ (117 aa)) are disordered. The span at 239–249 (PTGEKEGKTPE) shows a compositional bias: basic and acidic residues. Acidic residues predominate over residues 279 to 291 (PEEEAEEEEEECE). Positions 292–302 (PQAAPASSASA) are enriched in low complexity. A helical transmembrane segment spans residues 353-376 (LAVVIGVFVLCWFPFFFSYSLGAI). Residues 377-385 (CPQRCKVPH) lie on the Extracellular side of the membrane. The chain crosses the membrane as a helical span at residues 386–388 (GLF).

It belongs to the G-protein coupled receptor 1 family. Adrenergic receptor subfamily. ADRA2B sub-subfamily. Interacts with RAB26. Interacts with PPP1R9B.

It localises to the cell membrane. Functionally, alpha-2 adrenergic receptors mediate the catecholamine-induced inhibition of adenylate cyclase through the action of G proteins. The protein is Alpha-2B adrenergic receptor (ADRA2B) of Orycteropus afer (Aardvark).